Consider the following 266-residue polypeptide: 4-hydroxy-tetrahydrodipicolinate reductase (266 aa).

10 to 15 (GPRGRM) provides a ligand contact to NAD(+). K38 lines the NADP(+) pocket. NAD(+) is bound by residues 99 to 101 (GTT) and 125 to 128 (APNF). H155 (proton donor/acceptor) is an active-site residue. H156 is a binding site for (S)-2,3,4,5-tetrahydrodipicolinate. Residue K159 is the Proton donor of the active site. (S)-2,3,4,5-tetrahydrodipicolinate is bound at residue 165–166 (GT).

This sequence belongs to the DapB family.

Its subcellular location is the cytoplasm. The enzyme catalyses (S)-2,3,4,5-tetrahydrodipicolinate + NAD(+) + H2O = (2S,4S)-4-hydroxy-2,3,4,5-tetrahydrodipicolinate + NADH + H(+). It carries out the reaction (S)-2,3,4,5-tetrahydrodipicolinate + NADP(+) + H2O = (2S,4S)-4-hydroxy-2,3,4,5-tetrahydrodipicolinate + NADPH + H(+). The protein operates within amino-acid biosynthesis; L-lysine biosynthesis via DAP pathway; (S)-tetrahydrodipicolinate from L-aspartate: step 4/4. Catalyzes the conversion of 4-hydroxy-tetrahydrodipicolinate (HTPA) to tetrahydrodipicolinate. This Bacillus cereus (strain ATCC 10987 / NRS 248) protein is 4-hydroxy-tetrahydrodipicolinate reductase.